The sequence spans 35 residues: MSDIN-like toxin proprotein 6 (35 aa).

A propeptide spanning residues 1–10 (MSDINGTRLP) is cleaved from the precursor. Residues 11-20 (IPGLIPLGIP) constitute a cross-link (cyclopeptide (Ile-Pro)). A propeptide spanning residues 21–35 (CVSDDVNPTLTRGER) is cleaved from the precursor.

The protein belongs to the MSDIN fungal toxin family. Post-translationally, processed by the macrocyclase-peptidase enzyme POPB to yield a toxic cyclic decapeptide. POPB first removes 10 residues from the N-terminus. Conformational trapping of the remaining peptide forces the enzyme to release this intermediate rather than proceed to macrocyclization. The enzyme rebinds the remaining peptide in a different conformation and catalyzes macrocyclization of the N-terminal 10 residues.

Probable toxin that belongs to the MSDIN-like toxin family responsible for a large number of food poisoning cases and deaths. The sequence is that of MSDIN-like toxin proprotein 6 from Amanita bisporigera (Destroying angel).